We begin with the raw amino-acid sequence, 431 residues long: Glutamate-1-semialdehyde 2,1-aminomutase (431 aa).

Lys-265 bears the N6-(pyridoxal phosphate)lysine mark.

The protein belongs to the class-III pyridoxal-phosphate-dependent aminotransferase family. HemL subfamily. In terms of assembly, homodimer. The cofactor is pyridoxal 5'-phosphate.

The protein localises to the cytoplasm. The enzyme catalyses (S)-4-amino-5-oxopentanoate = 5-aminolevulinate. Its pathway is porphyrin-containing compound metabolism; protoporphyrin-IX biosynthesis; 5-aminolevulinate from L-glutamyl-tRNA(Glu): step 2/2. This Vibrio atlanticus (strain LGP32) (Vibrio splendidus (strain Mel32)) protein is Glutamate-1-semialdehyde 2,1-aminomutase.